The sequence spans 112 residues: MGYRRFGLTTGHRKAMLRNLVTSLFRDERIETTGPRAKDVRSIAEKLVTVAKKGDLAARRQCLEYIYEEDVVRKLFDTIAPQYAERQGGYTRIIKVGYRRGDAAEMVLLELV.

Belongs to the bacterial ribosomal protein bL17 family. As to quaternary structure, part of the 50S ribosomal subunit. Contacts protein L32.

This chain is Large ribosomal subunit protein bL17, found in Desulforamulus reducens (strain ATCC BAA-1160 / DSM 100696 / MI-1) (Desulfotomaculum reducens).